The sequence spans 219 residues: N-(5'-phosphoribosyl)anthranilate isomerase (219 aa).

Belongs to the TrpF family.

The catalysed reaction is N-(5-phospho-beta-D-ribosyl)anthranilate = 1-(2-carboxyphenylamino)-1-deoxy-D-ribulose 5-phosphate. It participates in amino-acid biosynthesis; L-tryptophan biosynthesis; L-tryptophan from chorismate: step 3/5. This is N-(5'-phosphoribosyl)anthranilate isomerase from Bradyrhizobium sp. (strain BTAi1 / ATCC BAA-1182).